A 496-amino-acid chain; its full sequence is Galactan beta-1,4-galactosyltransferase GALS1 (496 aa).

Residues 22–42 traverse the membrane as a helical segment; it reads IIATLLALSLVMIVWNLPPYY. The GT92 domain occupies 232–464; it reads DYLYCGSSLY…AKKKVTLYNK (233 aa).

Belongs to the glycosyltransferase 92 family. In terms of tissue distribution, expressed in root vasculature, mature leaves, trichomes, flowers, siliques and seeds.

It is found in the golgi apparatus membrane. Involved in the biosynthesis of beta-1,4-galactan. Can transfer galactose residues from UDP-galactose to beta-1,4-galactopentaose in vitro. Forms specifically beta-1,4-galactosyl linkages and can add successive beta-1,4-galactosyl residues to the acceptor. Beta-1,4-galactans are abundant polysaccharides in plant cell walls and are found as side-chain of rhamnogalacturonan I, which is a major component of pectin. This chain is Galactan beta-1,4-galactosyltransferase GALS1, found in Arabidopsis thaliana (Mouse-ear cress).